The following is a 227-amino-acid chain: MKFAVIVFPGSNCDVDMFHAIKDELGEEVDYVWHDTENLDEYDAILLPGGFSYGDYLRCGAISRFANAMKAVQKAAEQGKPILGVCNGFQILVESGLLPGALIRNENLKFMCRTVQLRVENNETMFTSQYEKDEIINIPIAHGEGNYYCDEATLKQLEENNQIAFRYVENPNGSVSDIAGIVNEKGNVLGMMPHPERAVDELLGGAEGLKVFQSILKQWRETYVVNA.

The region spanning 3 to 225 is the Glutamine amidotransferase type-1 domain; that stretch reads FAVIVFPGSN…LKQWRETYVV (223 aa). The Nucleophile role is filled by cysteine 86. Catalysis depends on residues histidine 194 and glutamate 196.

As to quaternary structure, part of the FGAM synthase complex composed of 1 PurL, 1 PurQ and 2 PurS subunits.

It localises to the cytoplasm. It catalyses the reaction N(2)-formyl-N(1)-(5-phospho-beta-D-ribosyl)glycinamide + L-glutamine + ATP + H2O = 2-formamido-N(1)-(5-O-phospho-beta-D-ribosyl)acetamidine + L-glutamate + ADP + phosphate + H(+). The enzyme catalyses L-glutamine + H2O = L-glutamate + NH4(+). The protein operates within purine metabolism; IMP biosynthesis via de novo pathway; 5-amino-1-(5-phospho-D-ribosyl)imidazole from N(2)-formyl-N(1)-(5-phospho-D-ribosyl)glycinamide: step 1/2. Functionally, part of the phosphoribosylformylglycinamidine synthase complex involved in the purines biosynthetic pathway. Catalyzes the ATP-dependent conversion of formylglycinamide ribonucleotide (FGAR) and glutamine to yield formylglycinamidine ribonucleotide (FGAM) and glutamate. The FGAM synthase complex is composed of three subunits. PurQ produces an ammonia molecule by converting glutamine to glutamate. PurL transfers the ammonia molecule to FGAR to form FGAM in an ATP-dependent manner. PurS interacts with PurQ and PurL and is thought to assist in the transfer of the ammonia molecule from PurQ to PurL. The protein is Phosphoribosylformylglycinamidine synthase subunit PurQ of Bacillus cereus (strain B4264).